Consider the following 844-residue polypeptide: Proto-oncogene vav (844 aa).

The 119-residue stretch at 1-119 (MELWRQCTHW…YTLSALSWTP (119 aa)) folds into the Calponin-homology (CH) domain. Residues 193-372 (KRCCCLREIQ…RDLAQCVNEV (180 aa)) form the DH domain. The 103-residue stretch at 401-503 (RPKIDGELKI…WMEQFEMAIS (103 aa)) folds into the PH domain. Residues 514–563 (GHDFQMFSFEETTSCKACQMLLRGTFYQGYRCQRCRAPAHKECLGRVPPC) form a Phorbol-ester/DAG-type zinc finger. A disordered region spans residues 567–589 (GQDYSGTMKKDKPHRRAQDKKRN). The 69-residue stretch at 591 to 659 (LGLPKMEVCQ…PCNRVKPYVH (69 aa)) folds into the SH3 1 domain. An SH2 domain is found at 670–764 (WYAGPMERAG…SLDTTLQFPF (95 aa)). One can recognise an SH3 2 domain in the interval 781–841 (KIFGTAKARY…PSNYVEEDYS (61 aa)). Phosphotyrosine is present on residues Tyr825 and Tyr843.

Interacts with SHB. Interacts with APS, DOCK2, GRB2, GRB3, DOCK2, SLA, TEC and ZNF655/VIK. Interacts with SIAH2; without leading to its degradation. Associates with BLNK, PLCG1, GRB2 and NCK1 in a B-cell antigen receptor-dependent fashion. Interacts with CBLB; which inhibits tyrosine phosphorylation and down-regulates activity. May interact with CCPG1. Interacts with CLNK. Interacts with THEMIS2. Interacts with NEK3 and this interaction is prolactin-dependent. Interacts with ITK. Interacts with PTK2B/PYK2. Interacts with HCK. Interacts with PTK2B/PYK2. Interacts (via SH2 domain) with SYK. Interacts with ANKRD54. Interacts with CD6. Interacts with LCP2; this interaction plays a role in TCR-mediated cytokine production. Post-translationally, phosphorylated by FYN. Phosphorylated on tyrosine residues by HCK in response to IFNG and bacterial lipopolysaccharide (LPS).

In terms of biological role, couples tyrosine kinase signals with the activation of the Rho/Rac GTPases, thus leading to cell differentiation and/or proliferation. This chain is Proto-oncogene vav (VAV1), found in Bos taurus (Bovine).